The following is an 85-amino-acid chain: Small ribosomal subunit protein bS16c (85 aa).

It belongs to the bacterial ribosomal protein bS16 family.

The protein localises to the plastid. Its subcellular location is the chloroplast. The sequence is that of Small ribosomal subunit protein bS16c from Cucumis sativus (Cucumber).